Consider the following 414-residue polypeptide: Argininosuccinate synthase (414 aa).

Position 12–20 (12–20) interacts with ATP; the sequence is AYSGGLDTS. Residues Tyr-90 and Ser-95 each coordinate L-citrulline. Gly-120 serves as a coordination point for ATP. Positions 122, 126, and 127 each coordinate L-aspartate. Asn-126 is a binding site for L-citrulline. Residues Arg-130, Ser-179, Ser-188, Glu-264, and Tyr-276 each coordinate L-citrulline.

This sequence belongs to the argininosuccinate synthase family. Type 1 subfamily. Homotetramer.

It localises to the cytoplasm. It catalyses the reaction L-citrulline + L-aspartate + ATP = 2-(N(omega)-L-arginino)succinate + AMP + diphosphate + H(+). Its pathway is amino-acid biosynthesis; L-arginine biosynthesis; L-arginine from L-ornithine and carbamoyl phosphate: step 2/3. The sequence is that of Argininosuccinate synthase from Alkaliphilus metalliredigens (strain QYMF).